We begin with the raw amino-acid sequence, 480 residues long: UDP-glucose 6-dehydrogenase 2 (480 aa).

NAD(+) contacts are provided by residues 8 to 13, aspartate 33, arginine 38, 86 to 90, 127 to 128, and glutamate 161; these read GAGYVG, VNTPT, and ST. Substrate is bound by residues 157–161, 216–223, and 256–269; these read EFLAE, KLAANAFL, and RIGP…VGFG. Cysteine 272 functions as the Nucleophile in the catalytic mechanism. Residue 272–275 coordinates NAD(+); it reads CFQK. A substrate-binding site is contributed by 334 to 335; the sequence is FK. Arginine 342 lines the NAD(+) pocket. Residue arginine 447 coordinates substrate.

This sequence belongs to the UDP-glucose/GDP-mannose dehydrogenase family. As to expression, preferentially expressed in roots.

It catalyses the reaction UDP-alpha-D-glucose + 2 NAD(+) + H2O = UDP-alpha-D-glucuronate + 2 NADH + 3 H(+). It participates in nucleotide-sugar biosynthesis; UDP-alpha-D-glucuronate biosynthesis; UDP-alpha-D-glucuronate from UDP-alpha-D-glucose: step 1/1. Inhibited by UDP-xylose. Involved in the biosynthesis of UDP-glucuronic acid (UDP-GlcA), providing nucleotide sugars for cell-wall polymers. Required for the formation of cell wall ingrowths on the outer cell walls of nematode-induced syncytia. In Arabidopsis thaliana (Mouse-ear cress), this protein is UDP-glucose 6-dehydrogenase 2 (UGD2).